The following is a 104-amino-acid chain: MAIVKATDQSFSAETSEGVVLADFWAPWCGPCKMIAPVLEELDQEMGDKLKIVKIDVDENQETAGKYGVMSIPTLLVLKDGEVVETSVGFKPKEALQELVNKHL.

Positions 2-104 (AIVKATDQSF…ALQELVNKHL (103 aa)) constitute a Thioredoxin domain. The cysteines at positions 29 and 32 are disulfide-linked.

The protein belongs to the thioredoxin family.

In terms of biological role, participates in various redox reactions through the reversible oxidation of its active center dithiol to a disulfide and catalyzes dithiol-disulfide exchange reactions. The polypeptide is Thioredoxin (trxA) (Bacillus subtilis (strain 168)).